The primary structure comprises 496 residues: 3-octaprenyl-4-hydroxybenzoate carboxy-lyase (496 aa).

Asn-181 is a binding site for Mn(2+). Prenylated FMN is bound by residues Ile-184–Arg-186, Arg-198–Leu-200, and Arg-203–Gly-204. Glu-247 serves as a coordination point for Mn(2+). The Proton donor role is filled by Asp-296.

This sequence belongs to the UbiD family. As to quaternary structure, homohexamer. It depends on prenylated FMN as a cofactor. The cofactor is Mn(2+).

Its subcellular location is the cell membrane. The enzyme catalyses a 4-hydroxy-3-(all-trans-polyprenyl)benzoate + H(+) = a 2-(all-trans-polyprenyl)phenol + CO2. It functions in the pathway cofactor biosynthesis; ubiquinone biosynthesis. Its function is as follows. Catalyzes the decarboxylation of 3-octaprenyl-4-hydroxy benzoate to 2-octaprenylphenol, an intermediate step in ubiquinone biosynthesis. This chain is 3-octaprenyl-4-hydroxybenzoate carboxy-lyase, found in Azoarcus sp. (strain BH72).